The sequence spans 158 residues: Small ribosomal subunit protein uS7 (158 aa).

Belongs to the universal ribosomal protein uS7 family. Part of the 30S ribosomal subunit. Contacts proteins S9 and S11.

Its function is as follows. One of the primary rRNA binding proteins, it binds directly to 16S rRNA where it nucleates assembly of the head domain of the 30S subunit. Is located at the subunit interface close to the decoding center, probably blocks exit of the E-site tRNA. This Leptospira biflexa protein is Small ribosomal subunit protein uS7.